Here is a 138-residue protein sequence, read N- to C-terminus: Histone H3-like centromeric protein A (138 aa).

Residues 1 to 40 (MGPRRQKRKPETPRRRPASPAPAAPRPTPSLGTSSRPLAR) are disordered. A N,N,N-trimethylglycine modification is found at Gly-2. Ser-19 is modified (phosphoserine). Over residues 19–28 (SPAPAAPRPT) the composition is skewed to pro residues. Residues 37-52 (PLARRRHTVLKEIRTL) form an important for flexibility of DNA ends that protrude from nucleosomes region. The tract at residues 39–138 (ARRRHTVLKE…RIRGIQEGLG (100 aa)) is H3-like. The segment at 73–114 (CVQFTRGVDFNWQAQALLALQEAAEAFLVHLFEDAYLLSLHA) is CATD.

It belongs to the histone H3 family. In terms of assembly, component of centromeric nucleosomes, where DNA is wrapped around a histone octamer core. The octamer contains two molecules each of H2A, H2B, CENPA and H4 assembled in one CENPA-H4 heterotetramer and two H2A-H2B heterodimers. CENPA modulates the DNA-binding characteristics of nucleosomes so that protruding DNA ends have higher flexibility than in nucleosomes containing conventional histone H3. Inhibits binding of histone H1 to nucleosomes, since histone H1 binds preferentially to rigid DNA linkers that protrude from nucleosomes. Nucleosomes containing CENPA also contain histone H2A variants such as MACROH2A and H2A.Z/H2AZ1. The CENPA-H4 heterotetramer is more compact and structurally more rigid than corresponding H3-H4 heterotetramers. Can assemble into nucleosomes that contain both CENPA and histone H3.3; these nucleosomes interact with a single CENPC chain. Heterotrimer composed of HJURP, CENPA and histone H4, where HJURP interacts with the dimer formed by CENPA and histone H4 and prevents tetramerization of CENPA and H4. Component of the CENPA-NAC complex, at least composed of CENPA, CENPC, CENPH, CENPM, CENPN, CENPT and CENPU. Interacts (via CATD domain) with HJURP; the interaction is direct and is required for its localization to centromeres. Interacts with CENPC, CENPN and CENPT; interaction is direct. Part of a centromere complex consisting of CENPA, CENPT and CENPW. Identified in centromere complexes containing histones H2A, H2B and H4, and at least CENPA, CENPB, CENPC, CENPT, CENPN, HJURP, SUPT16H, SSRP1 and RSF1. Can self-associate. The CENPA-H4 heterotetramer can bind DNA by itself (in vitro). Interacts with CDK1, PPP1CA and RBBP7. Post-translationally, trimethylated by NTMT1 at the N-terminal glycine after cleavage of Met-1. Methylation is low before incorporation into nucleosomes and increases with cell cycle progression, with the highest levels in mitotic nucleosomes. In terms of processing, poly-ADP-ribosylated by PARP1.

The protein resides in the nucleus. The protein localises to the chromosome. Its subcellular location is the centromere. Histone H3-like nucleosomal protein that is specifically found in centromeric nucleosomes. Replaces conventional H3 in the nucleosome core of centromeric chromatin that serves as an assembly site for the inner kinetochore. The presence of CENPA subtly modifies the nucleosome structure and the way DNA is wrapped around the nucleosome and gives rise to protruding DNA ends that are less well-ordered and rigid compared to nucleosomes containing histone H3. May serve as an epigenetic mark that propagates centromere identity through replication and cell division. Required for recruitment and assembly of kinetochore proteins, and as a consequence required for progress through mitosis, chromosome segregation and cytokinesis. The protein is Histone H3-like centromeric protein A (CENPA) of Bos taurus (Bovine).